Reading from the N-terminus, the 240-residue chain is Adapter protein MecA (240 aa).

This sequence belongs to the MecA family. As to quaternary structure, homodimer.

Its function is as follows. Enables the recognition and targeting of unfolded and aggregated proteins to the ClpC protease or to other proteins involved in proteolysis. This chain is Adapter protein MecA, found in Streptococcus mutans serotype c (strain ATCC 700610 / UA159).